A 123-amino-acid polypeptide reads, in one-letter code: Prostate stem cell antigen (123 aa).

An N-terminal signal peptide occupies residues 1–20 (MKTVFFLLLATYLALHPGAA). Positions 21-95 (LQCYSCTAQM…CCYSDLCNVN (75 aa)) constitute a UPAR/Ly6 domain. Intrachain disulfides connect Cys-23–Cys-48, Cys-26–Cys-35, Cys-41–Cys-66, Cys-70–Cys-86, and Cys-87–Cys-92. The N-linked (GlcNAc...) asparagine glycan is linked to Asn-40. Asn-95 is lipidated: GPI-anchor amidated asparagine. Residues 96 to 123 (GAHTLKPPTTLGLLTVLCSLLLWGSSRL) constitute a propeptide, removed in mature form.

In terms of assembly, interacts with CHRNA4. As to expression, predominantly expressed in prostate. Also found in spleen, liver, lung, prostate, kidney and testis. Expressed in brain cortex; expression is increased in transgenic mouse model of Alzheimer disease (at protein level).

The protein localises to the cell membrane. May be involved in the regulation of cell proliferation. Its function is as follows. May act as a modulator of nicotinic acetylcholine receptors (nAChRs) activity. In vitro inhibits nicotine-induced signaling probably implicating alpha-3:beta-2- or alpha-7-containing nAChRs. This chain is Prostate stem cell antigen (Psca), found in Mus musculus (Mouse).